The primary structure comprises 87 residues: Small ribosomal subunit protein bS18 (87 aa).

This sequence belongs to the bacterial ribosomal protein bS18 family. In terms of assembly, part of the 30S ribosomal subunit. Forms a tight heterodimer with protein bS6.

Functionally, binds as a heterodimer with protein bS6 to the central domain of the 16S rRNA, where it helps stabilize the platform of the 30S subunit. In Mesomycoplasma hyopneumoniae (strain 232) (Mycoplasma hyopneumoniae), this protein is Small ribosomal subunit protein bS18.